A 274-amino-acid chain; its full sequence is Cytochrome b-c1 complex subunit Rieske, mitochondrial (274 aa).

Residues 79-103 (SHTDVRVPDFSEYRRLEVLDSTKSS) are Mitochondrial matrix-facing. The helical transmembrane segment at 104–140 (RESSEARKGFSYLVTGVTTVGVAYAAKNVVTQFVSSM) threads the bilayer. The Mitochondrial intermembrane segment spans residues 141–274 (SASADVLALA…FTSDDMVIVG (134 aa)). In terms of domain architecture, Rieske spans 187 to 272 (EAAVELSQLR…YEFTSDDMVI (86 aa)). Positions 217, 219, 236, 239, and 241 each coordinate [2Fe-2S] cluster. C222 and C238 form a disulfide bridge.

The protein belongs to the Rieske iron-sulfur protein family. Component of the ubiquinol-cytochrome c oxidoreductase (cytochrome b-c1 complex, complex III, CIII), a multisubunit enzyme composed of 11 subunits. The complex is composed of 3 respiratory subunits cytochrome b, cytochrome c1 and Rieske protein UQCRFS1, 2 core protein subunits UQCRC1/QCR1 and UQCRC2/QCR2, and 6 low-molecular weight protein subunits UQCRH/QCR6, UQCRB/QCR7, UQCRQ/QCR8, UQCR10/QCR9, UQCR11/QCR10 and subunit 9, the cleavage product of Rieske protein UQCRFS1. The complex exists as an obligatory dimer and forms supercomplexes (SCs) in the inner mitochondrial membrane with NADH-ubiquinone oxidoreductase (complex I, CI) and cytochrome c oxidase (complex IV, CIV), resulting in different assemblies (supercomplex SCI(1)III(2)IV(1) and megacomplex MCI(2)III(2)IV(2)). Incorporation of the Rieske protein UQCRFS1 is the penultimate step in complex III assembly. Interacts with TTC19, which is involved in the clearance of UQCRFS1 fragments. In terms of assembly, component of the ubiquinol-cytochrome c oxidoreductase (cytochrome b-c1 complex, complex III, CIII). Subunit 9 corresponds to the mitochondrial targeting sequence (MTS) of Rieske protein UQCRFS1. It is retained after processing and incorporated inside complex III, where it remains bound to the complex and localizes between the 2 core subunits UQCRC1/QCR1 and UQCRC2/QCR2. [2Fe-2S] cluster serves as cofactor. Post-translationally, proteolytic processing is necessary for the correct insertion of UQCRFS1 in the complex III dimer. Several fragments are generated during UQCRFS1 insertion, most probably due to the endogenous matrix-processing peptidase (MPP) activity of the 2 core protein subunits UQCRC1/QCR1 and UQCRC2/QCR2, which are homologous to the 2 mitochondrial-processing peptidase (MPP) subunits beta-MPP and alpha-MPP respectively. The action of the protease is also necessary for the clearance of the UQCRFS1 fragments.

The protein resides in the mitochondrion inner membrane. It carries out the reaction a quinol + 2 Fe(III)-[cytochrome c](out) = a quinone + 2 Fe(II)-[cytochrome c](out) + 2 H(+)(out). Component of the ubiquinol-cytochrome c oxidoreductase, a multisubunit transmembrane complex that is part of the mitochondrial electron transport chain which drives oxidative phosphorylation. The respiratory chain contains 3 multisubunit complexes succinate dehydrogenase (complex II, CII), ubiquinol-cytochrome c oxidoreductase (cytochrome b-c1 complex, complex III, CIII) and cytochrome c oxidase (complex IV, CIV), that cooperate to transfer electrons derived from NADH and succinate to molecular oxygen, creating an electrochemical gradient over the inner membrane that drives transmembrane transport and the ATP synthase. The cytochrome b-c1 complex catalyzes electron transfer from ubiquinol to cytochrome c, linking this redox reaction to translocation of protons across the mitochondrial inner membrane, with protons being carried across the membrane as hydrogens on the quinol. In the process called Q cycle, 2 protons are consumed from the matrix, 4 protons are released into the intermembrane space and 2 electrons are passed to cytochrome c. The Rieske protein is a catalytic core subunit containing a [2Fe-2S] iron-sulfur cluster. It cycles between 2 conformational states during catalysis to transfer electrons from the quinol bound in the Q(0) site in cytochrome b to cytochrome c1. Incorporation of UQCRFS1 is the penultimate step in complex III assembly. Functionally, component of the ubiquinol-cytochrome c oxidoreductase (cytochrome b-c1 complex, complex III, CIII). UQCRFS1 undergoes proteolytic processing once it is incorporated in the complex III dimer. One of the fragments, called subunit 9, corresponds to its mitochondrial targeting sequence (MTS). The proteolytic processing is necessary for the correct insertion of UQCRFS1 in the complex III dimer, but the persistence of UQCRFS1-derived fragments may prevent newly imported UQCRFS1 to be processed and assembled into complex III and is detrimental for the complex III structure and function. This Pongo pygmaeus (Bornean orangutan) protein is Cytochrome b-c1 complex subunit Rieske, mitochondrial (UQCRFS1).